The sequence spans 880 residues: DNA-directed RNA polymerase subunit Rpo1N (880 aa).

Residues cysteine 58, cysteine 61, cysteine 68, histidine 71, cysteine 98, cysteine 101, cysteine 146, and cysteine 149 each coordinate Zn(2+). Residues aspartate 456, aspartate 458, and aspartate 460 each contribute to the Mg(2+) site. Arginine 573, cysteine 575, cysteine 580, histidine 582, and serine 584 together coordinate Zn(2+).

It belongs to the RNA polymerase beta' chain family. Part of the 13-subunit RNA polymerase complex. Interacts with TFS4. In terms of assembly, (Microbial infection) Binds viral protein RIP, which blocks global transcription. Mg(2+) serves as cofactor. Requires Zn(2+) as cofactor.

It localises to the cytoplasm. It carries out the reaction RNA(n) + a ribonucleoside 5'-triphosphate = RNA(n+1) + diphosphate. (Microbial infection) Binds to viral protein RIP (AC Q3V4R7), which inhibits global transcription. Functionally, DNA-dependent RNA polymerase (RNAP) catalyzes the transcription of DNA into RNA using the four ribonucleoside triphosphates as substrates. Forms the clamp head domain. This Sulfolobus acidocaldarius (strain ATCC 33909 / DSM 639 / JCM 8929 / NBRC 15157 / NCIMB 11770) protein is DNA-directed RNA polymerase subunit Rpo1N.